The primary structure comprises 419 residues: Argininosuccinate synthase (419 aa).

Residues 9–17 and alanine 35 each bind ATP; that span reads AYSGGLDTS. 2 residues coordinate L-citrulline: tyrosine 86 and serine 91. 114–122 contributes to the ATP binding site; it reads AHGATGKGN. The L-aspartate site is built by threonine 118, asparagine 122, and aspartate 123. Asparagine 122 serves as a coordination point for L-citrulline. Arginine 126, serine 179, serine 188, glutamate 270, and tyrosine 282 together coordinate L-citrulline.

Belongs to the argininosuccinate synthase family. Type 1 subfamily. As to quaternary structure, homotetramer.

The enzyme catalyses L-citrulline + L-aspartate + ATP = 2-(N(omega)-L-arginino)succinate + AMP + diphosphate + H(+). It functions in the pathway amino-acid biosynthesis; L-arginine biosynthesis; L-arginine from L-ornithine and carbamoyl phosphate: step 2/3. The protein operates within nitrogen metabolism; urea cycle; (N(omega)-L-arginino)succinate from L-aspartate and L-citrulline: step 1/1. The protein is Argininosuccinate synthase of Drosophila melanogaster (Fruit fly).